We begin with the raw amino-acid sequence, 136 residues long: Large ribosomal subunit protein uL16 (136 aa).

The protein belongs to the universal ribosomal protein uL16 family. Part of the 50S ribosomal subunit.

In terms of biological role, binds 23S rRNA and is also seen to make contacts with the A and possibly P site tRNAs. The polypeptide is Large ribosomal subunit protein uL16 (Shewanella loihica (strain ATCC BAA-1088 / PV-4)).